The sequence spans 559 residues: Aspartokinase 3, chloroplastic (559 aa).

A chloroplast-targeting transit peptide spans 1-85 (MAASMQFYGV…LNKTEKKLTC (85 aa)). Residues Lys-88, Gly-91, and Ser-120 each coordinate ATP. Glu-204 is a binding site for substrate. ACT domains lie at 402–480 (ITST…SIIS) and 481–559 (LIGN…AASS).

It belongs to the aspartokinase family. Highly expressed in xylem of leaves and hypocotyls, stele of roots and in trichomes after bolting. Weak expression in veins and mesophyll cells of caulone leaves, inflorescence stems, sepals, petals and stigmata.

It is found in the plastid. The protein localises to the chloroplast. It catalyses the reaction L-aspartate + ATP = 4-phospho-L-aspartate + ADP. It functions in the pathway amino-acid biosynthesis; L-lysine biosynthesis via DAP pathway; (S)-tetrahydrodipicolinate from L-aspartate: step 1/4. Its pathway is amino-acid biosynthesis; L-methionine biosynthesis via de novo pathway; L-homoserine from L-aspartate: step 1/3. The protein operates within amino-acid biosynthesis; L-threonine biosynthesis; L-threonine from L-aspartate: step 1/5. Allosterically inhibited by lysine, but not by S-adenosyl-L-methionine (SAM). K(0.5) for lysine in the presence of physiological concentrations of substrates is 7.4 uM. No inhibition by threonine or leucine and no activation or inhibition by alanine, cysteine, isoleucine, serine, valine, methionine, glutamine, asparagine, glutamic acid or arginine. In terms of biological role, involved in the first step of essential amino acids lysine, threonine, methionine and isoleucine synthesis via the aspartate-family pathway. This Arabidopsis thaliana (Mouse-ear cress) protein is Aspartokinase 3, chloroplastic (AK3).